A 306-amino-acid polypeptide reads, in one-letter code: Agmatinase (306 aa).

Mn(2+)-binding residues include His-126, Asp-149, His-151, Asp-153, Asp-230, and Asp-232.

The protein belongs to the arginase family. Agmatinase subfamily. Mn(2+) serves as cofactor.

It catalyses the reaction agmatine + H2O = urea + putrescine. It functions in the pathway amine and polyamine biosynthesis; putrescine biosynthesis via agmatine pathway; putrescine from agmatine: step 1/1. Functionally, catalyzes the formation of putrescine from agmatine. The sequence is that of Agmatinase from Escherichia coli (strain K12 / DH10B).